The sequence spans 486 residues: Zinc finger CCCH domain-containing protein 49 (486 aa).

Residues 157-184 form a C3H1-type zinc finger; sequence RNRAHVCSFYVRGECTRGAECPYRHEMP. The RRM domain maps to 228–301; it reads RTLYIGGLDS…VRLKLMWGKP (74 aa). Disordered stretches follow at residues 329 to 348 and 379 to 486; these read SQQQSGDQPQPPGMEGQQQP and LVES…NGMT. Composition is skewed to low complexity over residues 389-407 and 415-430; these read PGPQQAGQGQASSSSGQSY and YHGGQYPPYYPPYGGY. The span at 431–444 shows a compositional bias: pro residues; that stretch reads MPPPRMPYQQPPQY. Residues 445 to 486 show a composition bias toward low complexity; that stretch reads PAYQPMLAPPAQSQASSLQQPAPATQQLGQGPQQQTTQNGMT.

This Oryza sativa subsp. japonica (Rice) protein is Zinc finger CCCH domain-containing protein 49.